Here is a 246-residue protein sequence, read N- to C-terminus: Acetoacetate decarboxylase (246 aa).

The active-site Schiff-base intermediate with acetoacetate is K116.

Belongs to the ADC family.

The catalysed reaction is acetoacetate + H(+) = acetone + CO2. In terms of biological role, catalyzes the conversion of acetoacetate to acetone and carbon dioxide. This is Acetoacetate decarboxylase from Burkholderia cenocepacia (strain ATCC BAA-245 / DSM 16553 / LMG 16656 / NCTC 13227 / J2315 / CF5610) (Burkholderia cepacia (strain J2315)).